Reading from the N-terminus, the 387-residue chain is Type 2 DNA topoisomerase 6 subunit A (387 aa).

A Topo IIA-type catalytic domain is found at 12–160 (EARKKAADTL…MLILSKEKGK (149 aa)). The active-site O-(5'-phospho-DNA)-tyrosine intermediate is Y106. 2 residues coordinate Mg(2+): E207 and D259.

Belongs to the TOP6A family. In terms of assembly, homodimer. Heterotetramer of two Top6A and two Top6B chains. It depends on Mg(2+) as a cofactor.

The catalysed reaction is ATP-dependent breakage, passage and rejoining of double-stranded DNA.. Functionally, relaxes both positive and negative superturns and exhibits a strong decatenase activity. In Sulfurisphaera tokodaii (strain DSM 16993 / JCM 10545 / NBRC 100140 / 7) (Sulfolobus tokodaii), this protein is Type 2 DNA topoisomerase 6 subunit A.